A 487-amino-acid chain; its full sequence is N-succinylglutamate 5-semialdehyde dehydrogenase (487 aa).

221-226 serves as a coordination point for NAD(+); it reads GSSRTG. Residues Glu244 and Cys278 contribute to the active site.

The protein belongs to the aldehyde dehydrogenase family. AstD subfamily.

The catalysed reaction is N-succinyl-L-glutamate 5-semialdehyde + NAD(+) + H2O = N-succinyl-L-glutamate + NADH + 2 H(+). It participates in amino-acid degradation; L-arginine degradation via AST pathway; L-glutamate and succinate from L-arginine: step 4/5. In terms of biological role, catalyzes the NAD-dependent reduction of succinylglutamate semialdehyde into succinylglutamate. This Pseudomonas entomophila (strain L48) protein is N-succinylglutamate 5-semialdehyde dehydrogenase.